Here is a 501-residue protein sequence, read N- to C-terminus: Maturase K (501 aa).

This sequence belongs to the intron maturase 2 family. MatK subfamily.

It localises to the plastid. The protein resides in the chloroplast. Functionally, usually encoded in the trnK tRNA gene intron. Probably assists in splicing its own and other chloroplast group II introns. This is Maturase K from Amborella trichopoda.